A 547-amino-acid polypeptide reads, in one-letter code: Methyl-accepting chemotaxis citrate transducer (547 aa).

The Cytoplasmic portion of the chain corresponds to 1–5; that stretch reads MKNIK. A helical membrane pass occupies residues 6–29; it reads VITGVIATLGIFSALLLVTGILFY. Residues 30 to 189 lie on the Periplasmic side of the membrane; it reads SAVSSDRLNF…ASDQNQSSFT (160 aa). The chain crosses the membrane as a helical span at residues 190–213; sequence QMQWTLGIILLIVLIVLAFIWLGL. The Cytoplasmic portion of the chain corresponds to 214-547; that stretch reads QRVLLRPLQR…AAEQANWESF (334 aa). The 53-residue stretch at 215–267 folds into the HAMP domain; that stretch reads RVLLRPLQRIMAHIQTIADGDLTHEIEAEGRSEMGQLAAGLKTMQQSLIRTVS. Residues 272 to 501 form the Methyl-accepting transducer domain; it reads NADSIYTGAG…ESAAAAAALE (230 aa). A Glutamate methyl ester (Gln) modification is found at Q296. Residue E303 is modified to Glutamate methyl ester (Glu). Q310 carries the post-translational modification Glutamate methyl ester (Gln). The tract at residues 317–336 is disordered; sequence QNTDNARQATGLAKTASETA. E492 and E501 each carry glutamate methyl ester (Glu). A disordered region spans residues 518 to 547; it reads KQPRREASPTTLSKGLTPQPAAEQANWESF.

The protein belongs to the methyl-accepting chemotaxis (MCP) protein family. Post-translationally, methylation level is increased by citrate and decreased by phenol.

The protein localises to the cell inner membrane. Functionally, acts as a receptor for citrate and mediates taxis away from phenol. Also mediates an attractant response to metal-citrate complexes. This Salmonella typhimurium (strain LT2 / SGSC1412 / ATCC 700720) protein is Methyl-accepting chemotaxis citrate transducer (tcp).